Reading from the N-terminus, the 313-residue chain is Olfactory receptor 2B6 (313 aa).

Residues 1-27 lie on the Extracellular side of the membrane; the sequence is MSWANESITGEFVLLGFSDQPWLEFPL. An N-linked (GlcNAc...) asparagine glycan is attached at Asn5. Residues 28–48 traverse the membrane as a helical segment; sequence FVVFLTSYIVTIFGNLNIILV. The Cytoplasmic portion of the chain corresponds to 49–57; the sequence is SHLDPKLHT. The chain crosses the membrane as a helical span at residues 58 to 78; the sequence is PMYFFLTNLSVIDLCYITCTV. Over 79-97 the chain is Extracellular; it reads PQMLVNLRSIRKVISFGGC. An intrachain disulfide couples Cys97 to Cys189. Residues 98 to 118 form a helical membrane-spanning segment; the sequence is VVQLFMFLALGATECVLLPVM. At 119–143 the chain is on the cytoplasmic side; the sequence is SFDRFVAICRPLHYSVIMHQRLCLQ. A helical transmembrane segment spans residues 144 to 164; that stretch reads LAAVSWIIGFGNSVWLSILTL. The Extracellular portion of the chain corresponds to 165 to 200; that stretch reads QLPRCGHYVIDHFLCEVPALLKLSCVDVTANEAELF. A helical transmembrane segment spans residues 201 to 221; that stretch reads FVSVFFHLTPLSLILTSYAFI. The Cytoplasmic portion of the chain corresponds to 222 to 244; it reads ARAILKIQSAEGRQKAFGTCSSH. The helical transmembrane segment at 245–265 threads the bilayer; it reads LIVVSLFYGTALSVYFLPPSP. Topologically, residues 266-271 are extracellular; sequence HSKNRR. The chain crosses the membrane as a helical span at residues 272–292; the sequence is KMVPLFYGIIAPMLNPLIYTL. Over 293 to 313 the chain is Cytoplasmic; it reads RNKEVKDAFKRLIKRVFLSKN.

It belongs to the G-protein coupled receptor 1 family.

The protein resides in the cell membrane. Functionally, odorant receptor. The polypeptide is Olfactory receptor 2B6 (Mus musculus (Mouse)).